Reading from the N-terminus, the 251-residue chain is Imidazole glycerol phosphate synthase subunit HisF (251 aa).

Residues D11 and D130 contribute to the active site.

The protein belongs to the HisA/HisF family. In terms of assembly, heterodimer of HisH and HisF.

Its subcellular location is the cytoplasm. The enzyme catalyses 5-[(5-phospho-1-deoxy-D-ribulos-1-ylimino)methylamino]-1-(5-phospho-beta-D-ribosyl)imidazole-4-carboxamide + L-glutamine = D-erythro-1-(imidazol-4-yl)glycerol 3-phosphate + 5-amino-1-(5-phospho-beta-D-ribosyl)imidazole-4-carboxamide + L-glutamate + H(+). It functions in the pathway amino-acid biosynthesis; L-histidine biosynthesis; L-histidine from 5-phospho-alpha-D-ribose 1-diphosphate: step 5/9. Functionally, IGPS catalyzes the conversion of PRFAR and glutamine to IGP, AICAR and glutamate. The HisF subunit catalyzes the cyclization activity that produces IGP and AICAR from PRFAR using the ammonia provided by the HisH subunit. The sequence is that of Imidazole glycerol phosphate synthase subunit HisF from Natranaerobius thermophilus (strain ATCC BAA-1301 / DSM 18059 / JW/NM-WN-LF).